The chain runs to 77 residues: Putative sulfur carrier protein YedF (77 aa).

Residue Cys17 is the Cysteine persulfide intermediate of the active site.

The protein belongs to the sulfur carrier protein TusA family.

The polypeptide is Putative sulfur carrier protein YedF (yedF) (Escherichia coli O157:H7).